We begin with the raw amino-acid sequence, 419 residues long: L-rhamnose isomerase (419 aa).

The Mn(2+) site is built by His262, Asp294, and Asp296.

Belongs to the rhamnose isomerase family. As to quaternary structure, homotetramer. It depends on Mn(2+) as a cofactor.

The protein localises to the cytoplasm. The enzyme catalyses L-rhamnopyranose = L-rhamnulose. Its pathway is carbohydrate degradation; L-rhamnose degradation; glycerone phosphate from L-rhamnose: step 1/3. Functionally, catalyzes the interconversion of L-rhamnose and L-rhamnulose. The polypeptide is L-rhamnose isomerase (Salmonella typhi).